Reading from the N-terminus, the 931-residue chain is G patch domain-containing protein 1 (931 aa).

Disordered regions lie at residues Met1–Asp41, Pro73–Glu92, and Gln169–Asp209. Ala2 bears the N-acetylalanine mark. Phosphoserine occurs at positions 6 and 8. The G-patch domain occupies Lys152–Gly198. A Glycyl lysine isopeptide (Lys-Gly) (interchain with G-Cter in SUMO2) cross-link involves residue Lys312. Ser357 and Ser477 each carry phosphoserine. Disordered stretches follow at residues Arg568–Gln595 and Leu659–Gln931. The span at Glu582–Asp593 shows a compositional bias: basic and acidic residues. A compositionally biased stretch (polar residues) spans Leu659–Lys668. The span at Val669–Ser695 shows a compositional bias: basic and acidic residues. Position 715 is a phosphoserine (Ser715). Acidic residues predominate over residues Ser769–Gln780. Residues Ala786–Val802 show a composition bias toward polar residues. Basic residues predominate over residues Glu852 to Asn888. Over residues Ser896–Ser905 the composition is skewed to low complexity. The span at Arg922–Gln931 shows a compositional bias: basic residues.

Belongs to the GPATCH1 family.

The chain is G patch domain-containing protein 1 (GPATCH1) from Homo sapiens (Human).